The sequence spans 118 residues: Autophagy-related protein 8D (118 aa).

Gly118 carries Phosphatidylethanolamine amidated glycine lipidation.

The protein belongs to the ATG8 family. Interacts with ATG4. In terms of processing, the C-terminal Gly is amidated with phosphatidylethanolamine by an activating system similar to that for ubiquitin.

The protein localises to the cytoplasmic vesicle. It is found in the autophagosome membrane. It localises to the vacuole membrane. Its subcellular location is the cytoplasm. The protein resides in the cytoskeleton. Its function is as follows. Ubiquitin-like modifier involved in autophagosomes formation. May mediate the delivery of the autophagosomes to the vacuole via the microtubule cytoskeleton. The polypeptide is Autophagy-related protein 8D (ATG8D) (Oryza sativa subsp. japonica (Rice)).